The following is a 549-amino-acid chain: Protein wntless homolog (549 aa).

The N-terminal stretch at M1–A34 is a signal peptide. The Lumenal portion of the chain corresponds to Y36–G236. A helical membrane pass occupies residues F237 to W257. Over W258 to R275 the chain is Cytoplasmic. Residues A276–L296 traverse the membrane as a helical segment. The Lumenal portion of the chain corresponds to T297 to R310. The chain crosses the membrane as a helical span at residues Q311–I331. Over D332–N345 the chain is Cytoplasmic. Residues L346–I366 form a helical membrane-spanning segment. The Lumenal segment spans residues Q367 to Q383. A helical transmembrane segment spans residues I384–F404. At F405–R439 the chain is on the cytoplasmic side. A helical transmembrane segment spans residues F440–M460. At K461–S483 the chain is on the lumenal side. A helical transmembrane segment spans residues A484–Y504. The Cytoplasmic portion of the chain corresponds to A505–D549. Residues D524 to D549 are disordered. Over residues P530–D549 the composition is skewed to polar residues.

This sequence belongs to the wntless family. In terms of tissue distribution, expressed in the tail hypodermis, stomatointestinal muscle, the mesoblast cell M and its descendants, CAN neurons, the developing vulva, the pharynx and the pharyngeal intestinal valve.

It localises to the cell membrane. It is found in the early endosome membrane. The protein localises to the golgi apparatus membrane. The protein resides in the basal cell membrane. Its subcellular location is the late endosome membrane. Its function is as follows. Probable sorting receptor which regulates endocytosis and secretion of the wnt ligand egl-20. Recycling of mig-14 from the plasma membrane to the Golgi apparatus by the retromer complex is essential for its function. Its endosomal trafficking is regulated by its association with sorting nexin snx-3 on early endosomes and the mtm-6/mtm-9 myotubularin complex. Required in embryonic development for endoderm specification and the correct positioning and orientation of the mitotic spindles and division planes in blastomere cells. Functions during vulval development, playing a role in vulval precursor cell fate specification. During development, specifically regulates the migration of HSN neurons, the left Q neuroblast (QL) and its descendants and the distal tip cells of the gonads. Positioning of Q neuroblasts may be both dependent and independent of hox gene mab-5. Involved in establishing ALM and PLM neuronal cell polarity. The chain is Protein wntless homolog from Caenorhabditis elegans.